Consider the following 307-residue polypeptide: Methionyl-tRNA formyltransferase (307 aa).

108-111 contacts (6S)-5,6,7,8-tetrahydrofolate; sequence SLLP.

This sequence belongs to the Fmt family.

The enzyme catalyses L-methionyl-tRNA(fMet) + (6R)-10-formyltetrahydrofolate = N-formyl-L-methionyl-tRNA(fMet) + (6S)-5,6,7,8-tetrahydrofolate + H(+). Attaches a formyl group to the free amino group of methionyl-tRNA(fMet). The formyl group appears to play a dual role in the initiator identity of N-formylmethionyl-tRNA by promoting its recognition by IF2 and preventing the misappropriation of this tRNA by the elongation apparatus. In Renibacterium salmoninarum (strain ATCC 33209 / DSM 20767 / JCM 11484 / NBRC 15589 / NCIMB 2235), this protein is Methionyl-tRNA formyltransferase.